The following is a 121-amino-acid chain: Autophagy-related protein 8 (121 aa).

The Phosphatidylethanolamine amidated glycine moiety is linked to residue glycine 116. The propeptide at 117–121 (DFETA) is removed in mature form.

The protein belongs to the ATG8 family. In terms of processing, the C-terminal 5 residues are removed to expose Gly-116 at the C-terminus. The C-terminal Gly is then amidated with phosphatidylethanolamine by an activating system similar to that for ubiquitin.

The protein localises to the cytoplasmic vesicle. It localises to the autophagosome membrane. It is found in the vacuole membrane. Its function is as follows. Ubiquitin-like modifier involved in autophagosome formation. With cpr-1/atg4, mediates the delivery of the autophagosomes to the vacuole via the microtubule cytoskeleton. Required for selective autophagic degradation of the nucleus (nucleophagy) as well as for mitophagy which contributes to regulate mitochondrial quantity and quality by eliminating the mitochondria to a basal level to fulfill cellular energy requirements and preventing excess ROS production. Also participates in membrane fusion events that take place in the early secretory pathway. Also involved in endoplasmic reticulum-specific autophagic process and is essential for the survival of cells subjected to severe ER stress. The apg-6/atg8-PE conjugate mediates tethering between adjacent membranes and stimulates membrane hemifusion, leading to expansion of the autophagosomal membrane during autophagy. In Neurospora crassa (strain ATCC 24698 / 74-OR23-1A / CBS 708.71 / DSM 1257 / FGSC 987), this protein is Autophagy-related protein 8 (apg-6).